A 380-amino-acid chain; its full sequence is Actinidain (380 aa).

Positions 1–24 are cleaved as a signal peptide; that stretch reads MGLPKSFVSMSLLFFSTLLILSLA. Residues 25-126 constitute a propeptide, activation peptide; that stretch reads FNAKNLTQRT…NQYEPRVGQV (102 aa). Intrachain disulfides connect cysteine 148-cysteine 191, cysteine 182-cysteine 224, and cysteine 282-cysteine 332. The active site involves cysteine 151. Residue cysteine 151 participates in E64 binding. Catalysis depends on residues histidine 288 and asparagine 308.

The protein belongs to the peptidase C1 family. As to expression, fruit.

It carries out the reaction Specificity close to that of papain.. Its activity is regulated as follows. Repressed by the active-site-directed cysteine protease inhibitor E64 (L-trans-epoxysuccinyl-leucylamide-(4-guanido)-butane) produced by Aspergillus japonicus. Its function is as follows. Cysteine protease responsible for the cleavage of kiwellin into kissper and KiTH. The protein is Actinidain of Actinidia chinensis var. chinensis (Chinese soft-hair kiwi).